The sequence spans 154 residues: uncharacterized protein (154 aa).

The 137-residue stretch at 7 to 143 (RSELEKTAVQ…IFSFVGKAAD (137 aa)) folds into the HTH marR-type domain. A DNA-binding region (H-T-H motif) is located at residues 57-80 (AGELGKKTGLSTGSVTALVDRLEK).

This is an uncharacterized protein from Bacillus subtilis (strain 168).